The chain runs to 295 residues: MSSIKVECVIKEKNEVGESPVWEEKDSSLLYVDITGQKVSRWSSLTKQIESMNTEKLVGCVVPRQAGGYVIAEGTRFAFVDWVKRSITAVAEVNEKPNTRFNDGKVDPAGRFFAGTMSMDMKPDVVDAALYNLQPDHSVVRHFDQVHLSNGLDWSLDHRVFYYIDSLAFMVEAFDYDIQTGGLSNRRTVYKMEKDEGIPDGMCIDTEGKLWVACFNGGRVLRIDPQTGKRLQTVKLPAERITSCCFGGKDYSDLYITSAYIGMDAEALAKQPEAGCTFKVTGLGVKGIPPYSYTG.

Glutamate 18 is a binding site for a divalent metal cation. Substrate is bound by residues arginine 100, asparagine 102, and aspartate 120. 2 residues coordinate a divalent metal cation: asparagine 150 and aspartate 200. The active-site Proton donor/acceptor is aspartate 200.

This sequence belongs to the SMP-30/CGR1 family. Zn(2+) serves as cofactor. The cofactor is Mn(2+). It depends on Ca(2+) as a cofactor. Requires Mg(2+) as cofactor.

The protein resides in the cytoplasm. It catalyses the reaction D-glucono-1,5-lactone + H2O = D-gluconate + H(+). The protein operates within cofactor biosynthesis; L-ascorbate biosynthesis via UDP-alpha-D-glucuronate pathway; L-ascorbate from UDP-alpha-D-glucuronate: step 3/4. Its function is as follows. Gluconolactonase with low activity towards other sugar lactones, including gulonolactone and galactonolactone. Catalyzes a key step in ascorbic acid (vitamin C) biosynthesis. Can also hydrolyze diisopropyl phosphorofluoridate and phenylacetate (in vitro). Calcium-binding protein. Modulates Ca(2+) signaling, and Ca(2+)-dependent cellular processes and enzyme activities. The chain is Regucalcin from Danio rerio (Zebrafish).